The sequence spans 931 residues: Aconitate hydratase A (931 aa).

Residues 402–454 form a disordered region; that stretch reads SASPVDEASAESFPASDAPAYGSQENGAGAPQHADGTGAAVPSNPVTVTAPDG. Cys472, Cys538, and Cys541 together coordinate [4Fe-4S] cluster.

Belongs to the aconitase/IPM isomerase family. Requires [4Fe-4S] cluster as cofactor.

It carries out the reaction citrate = D-threo-isocitrate. The catalysed reaction is citrate = cis-aconitate + H2O. It catalyses the reaction cis-aconitate + H2O = D-threo-isocitrate. It functions in the pathway carbohydrate metabolism; tricarboxylic acid cycle; isocitrate from oxaloacetate: step 2/2. Functionally, catalyzes the reversible isomerization of citrate to isocitrate via cis-aconitate in the tricarboxylic acid (TCA) cycle. Aconitase activity is important for the initiation of morphological and physiological differentiation of S.viridochromogenes. In addition, the apo form of AcnA (lacking the [4Fe-4S] cluster) functions as a RNA-binding regulatory protein, which binds to iron responsive elements (IREs) located on the untranslated region of certain mRNAs, including recA and ftsZ. Binding to IRE-like structures probably alters the target mRNA stability and regulates the protein amount. The apo form plays a regulatory role in oxidative stress response. The sequence is that of Aconitate hydratase A from Streptomyces viridochromogenes (strain DSM 40736 / JCM 4977 / BCRC 1201 / Tue 494).